The following is a 261-amino-acid chain: Cytochrome c oxidase subunit 3 (261 aa).

Over 1 to 15 the chain is Mitochondrial matrix; the sequence is MTHQTHAYHMVNPSP. A helical membrane pass occupies residues 16–34; that stretch reads WPLTGALSALLMTSGLIMW. Over 35-40 the chain is Mitochondrial intermembrane; the sequence is FHFNST. Residues 41-66 form a helical membrane-spanning segment; the sequence is TLLMLGLTTNMLTMYQWWRDVVREST. Residues 67 to 72 lie on the Mitochondrial matrix side of the membrane; the sequence is FQGHHT. A helical membrane pass occupies residues 73–105; that stretch reads PNVQKGLRYGMILFIISEVLFFTGFFWAFYHSS. At 106–128 the chain is on the mitochondrial intermembrane side; sequence LAPTPELGGCWPPTGIHPLNPLE. Residues 129 to 152 traverse the membrane as a helical segment; the sequence is VPLLNTSVLLASGVSITWAHHSLM. The Mitochondrial matrix portion of the chain corresponds to 153-155; that stretch reads EGN. A helical membrane pass occupies residues 156–183; it reads RNHMLQALFITIALGVYFTLLQASEYYE. Topologically, residues 184–190 are mitochondrial intermembrane; that stretch reads APFTISD. A helical membrane pass occupies residues 191–223; sequence GVYGSTFFVATGFHGLHVIIGSTFLIVCFFRQL. Topologically, residues 224–232 are mitochondrial matrix; that stretch reads KFHFTSNHH. Residues 233 to 256 traverse the membrane as a helical segment; the sequence is FGFEAAAWYWHFVDVVWLFLYVSI. Over 257-261 the chain is Mitochondrial intermembrane; it reads YWWGS.

It belongs to the cytochrome c oxidase subunit 3 family. As to quaternary structure, component of the cytochrome c oxidase (complex IV, CIV), a multisubunit enzyme composed of 14 subunits. The complex is composed of a catalytic core of 3 subunits MT-CO1, MT-CO2 and MT-CO3, encoded in the mitochondrial DNA, and 11 supernumerary subunits COX4I, COX5A, COX5B, COX6A, COX6B, COX6C, COX7A, COX7B, COX7C, COX8 and NDUFA4, which are encoded in the nuclear genome. The complex exists as a monomer or a dimer and forms supercomplexes (SCs) in the inner mitochondrial membrane with NADH-ubiquinone oxidoreductase (complex I, CI) and ubiquinol-cytochrome c oxidoreductase (cytochrome b-c1 complex, complex III, CIII), resulting in different assemblies (supercomplex SCI(1)III(2)IV(1) and megacomplex MCI(2)III(2)IV(2)).

The protein resides in the mitochondrion inner membrane. It carries out the reaction 4 Fe(II)-[cytochrome c] + O2 + 8 H(+)(in) = 4 Fe(III)-[cytochrome c] + 2 H2O + 4 H(+)(out). In terms of biological role, component of the cytochrome c oxidase, the last enzyme in the mitochondrial electron transport chain which drives oxidative phosphorylation. The respiratory chain contains 3 multisubunit complexes succinate dehydrogenase (complex II, CII), ubiquinol-cytochrome c oxidoreductase (cytochrome b-c1 complex, complex III, CIII) and cytochrome c oxidase (complex IV, CIV), that cooperate to transfer electrons derived from NADH and succinate to molecular oxygen, creating an electrochemical gradient over the inner membrane that drives transmembrane transport and the ATP synthase. Cytochrome c oxidase is the component of the respiratory chain that catalyzes the reduction of oxygen to water. Electrons originating from reduced cytochrome c in the intermembrane space (IMS) are transferred via the dinuclear copper A center (CU(A)) of subunit 2 and heme A of subunit 1 to the active site in subunit 1, a binuclear center (BNC) formed by heme A3 and copper B (CU(B)). The BNC reduces molecular oxygen to 2 water molecules using 4 electrons from cytochrome c in the IMS and 4 protons from the mitochondrial matrix. The sequence is that of Cytochrome c oxidase subunit 3 (MT-CO3) from Gazella cuvieri (Cuvier's gazelle).